A 165-amino-acid polypeptide reads, in one-letter code: Protein FAM219A (165 aa).

M1 carries the post-translational modification N-acetylmethionine. The disordered stretch occupies residues 1-114; sequence MMEEIDRFQV…SRYSSSGYSS (114 aa). A compositionally biased stretch (basic and acidic residues) spans 32–44; it reads CDAREEKQRELAR. The segment covering 49 to 63 has biased composition (polar residues); sequence KNGSMGSPVNQQPKK. 2 positions are modified to phosphoserine: S55 and S85. Residue T96 is modified to Phosphothreonine. A phosphoserine mark is found at S98 and S105. The span at 105 to 114 shows a compositional bias: low complexity; the sequence is SRYSSSGYSS.

It belongs to the FAM219 family.

The sequence is that of Protein FAM219A (FAM219A) from Macaca fascicularis (Crab-eating macaque).